An 86-amino-acid polypeptide reads, in one-letter code: Testis-expressed protein 54 (86 aa).

A compositionally biased stretch (basic and acidic residues) spans Met1–Gly34. Disordered stretches follow at residues Met1–Ser43 and Ser57–Gly86.

Expressed in Testis.

The chain is Testis-expressed protein 54 from Mus musculus (Mouse).